The sequence spans 1091 residues: Multiple epidermal growth factor-like domains protein 11 (1091 aa).

Positions 1-18 (MAPSAVGLLVFLLQAALA) are cleaved as a signal peptide. Residues 19–847 (LNPEDPNVCS…SPALGAERHS (829 aa)) are Extracellular-facing. The 78-residue stretch at 23 to 100 (DPNVCSHWES…YYENGDFCIP (78 aa)) folds into the EMI domain. 14 disulfides stabilise this stretch: Cys27-Cys88, Cys53-Cys62, Cys87-Cys98, Cys102-Cys117, Cys119-Cys128, Cys145-Cys153, Cys147-Cys160, Cys162-Cys171, Cys184-Cys196, Cys190-Cys203, Cys205-Cys214, Cys227-Cys239, Cys233-Cys246, and Cys248-Cys257. 9 consecutive EGF-like domains span residues 94 to 129 (NGDF…PDCS), 142 to 172 (SNRC…WRCE), 180 to 215 (HGKG…VYCE), 223 to 258 (HGAH…AVCA), 266 to 301 (FGQN…DRCQ), 314 to 344 (SQRC…PSCQ), 398 to 433 (YGNG…EVCA), 441 to 476 (YGPN…LDCS), and 484 to 519 (WGLN…DSCE). An N-linked (GlcNAc...) asparagine glycan is attached at Asn269. 15 disulfides stabilise this stretch: Cys270–Cys282, Cys276–Cys289, Cys291–Cys300, Cys317–Cys325, Cys319–Cys332, Cys334–Cys343, Cys402–Cys414, Cys408–Cys421, Cys423–Cys432, Cys445–Cys457, Cys451–Cys464, Cys466–Cys475, Cys488–Cys500, Cys494–Cys507, and Cys509–Cys518. A glycan (N-linked (GlcNAc...) asparagine) is linked at Asn530. 6 consecutive EGF-like domains span residues 570-605 (WGPN…PLCQ), 613-650 (YGHG…ALCN), 658-693 (FGQD…KDCS), 706-736 (FHTC…LFCT), 749-779 (GHIC…RHCE), and 787-822 (FGYG…IRCD). Cystine bridges form between Cys574/Cys586, Cys580/Cys593, Cys595/Cys604, Cys617/Cys631, Cys621/Cys638, Cys640/Cys649, Cys662/Cys674, Cys668/Cys681, Cys683/Cys692, Cys709/Cys717, Cys711/Cys724, Cys726/Cys735, Cys752/Cys760, Cys754/Cys767, Cys769/Cys778, Cys791/Cys803, Cys797/Cys810, and Cys812/Cys821. The helical transmembrane segment at 848-868 (VGAVTGIVLLLFLVVVLLGLF) threads the bilayer. The Cytoplasmic portion of the chain corresponds to 869-1091 (AWRRRRQKEK…NIYEVGRCLT (223 aa)).

It belongs to the MEGF family. As to quaternary structure, homomer. Does not interact with MEGF10.

It localises to the cell membrane. The protein resides in the basolateral cell membrane. In terms of biological role, may regulate the mosaic spacing of specific neuron subtypes in the retina through homotypic retinal neuron repulsion. Mosaics provide a mechanism to distribute each cell type evenly across the retina, ensuring that all parts of the visual field have access to a full set of processing elements. This chain is Multiple epidermal growth factor-like domains protein 11 (Megf11), found in Mus musculus (Mouse).